The sequence spans 250 residues: Triosephosphate isomerase (250 aa).

Residue 9 to 11 (NWK) coordinates substrate. The active-site Electrophile is His94. Glu166 functions as the Proton acceptor in the catalytic mechanism. Substrate contacts are provided by residues Gly172, Ser212, and 233–234 (GG).

This sequence belongs to the triosephosphate isomerase family. As to quaternary structure, homodimer.

It is found in the cytoplasm. The enzyme catalyses D-glyceraldehyde 3-phosphate = dihydroxyacetone phosphate. It participates in carbohydrate biosynthesis; gluconeogenesis. It functions in the pathway carbohydrate degradation; glycolysis; D-glyceraldehyde 3-phosphate from glycerone phosphate: step 1/1. Its function is as follows. Involved in the gluconeogenesis. Catalyzes stereospecifically the conversion of dihydroxyacetone phosphate (DHAP) to D-glyceraldehyde-3-phosphate (G3P). The chain is Triosephosphate isomerase from Clostridium novyi (strain NT).